Here is a 416-residue protein sequence, read N- to C-terminus: D-amino acid dehydrogenase 2 (416 aa).

3 to 17 (ITVLGAGVVGTAAAY) is a binding site for FAD.

It belongs to the DadA oxidoreductase family. FAD serves as cofactor.

It catalyses the reaction a D-alpha-amino acid + A + H2O = a 2-oxocarboxylate + AH2 + NH4(+). Functionally, oxidative deamination of D-amino acids. This is D-amino acid dehydrogenase 2 (dadA2) from Mesorhizobium japonicum (strain LMG 29417 / CECT 9101 / MAFF 303099) (Mesorhizobium loti (strain MAFF 303099)).